Consider the following 221-residue polypeptide: GTP-binding nuclear protein Ran-2 (221 aa).

Residues aspartate 10–aspartate 174 enclose the Small GTPase Ran-type domain. Aspartate 21 to threonine 28 contributes to the GTP binding site. Positions lysine 40 to valine 48 are switch-I. GTP is bound by residues glycine 71, asparagine 125–aspartate 128, and serine 153–lysine 155. Residues glycine 71–glutamine 87 form a switch-II region. Residues alanine 202–leucine 212 are compositionally biased toward low complexity. Positions alanine 202–glutamate 221 are disordered.

Belongs to the small GTPase superfamily. Ran family. Found in a nuclear export complex with RanGTP, exportin and pre-miRNA. Interacts with RanBP1a and RanBP1b. Interacts with PHRIP1. Interacts with KPNB1. Binds to PHIP1.

It is found in the nucleus. It localises to the nucleus envelope. GTP-binding protein involved in nucleocytoplasmic transport. Required for the import of protein into the nucleus and also for RNA export. Involved in chromatin condensation and control of cell cycle. The sequence is that of GTP-binding nuclear protein Ran-2 from Arabidopsis thaliana (Mouse-ear cress).